The chain runs to 108 residues: Mitochondrial protein PET191 (108 aa).

The CHCH domain occupies 18–64; that stretch reads RSPCVMIERHNPQECLDNPELNKDLPELCIAQMKAFLDCKRGIVDMT. The Cx10C motif motif lies at 21–32; the sequence is CVMIERHNPQEC. Intrachain disulfides connect Cys-21/Cys-56 and Cys-32/Cys-46. The Cx9C motif motif lies at 46-56; it reads CIAQMKAFLDC.

It belongs to the PET191 family.

The protein resides in the mitochondrion intermembrane space. Its function is as follows. Involved in the assembly of cytochrome c oxidase. The sequence is that of Mitochondrial protein PET191 (PET191) from Saccharomyces cerevisiae (strain ATCC 204508 / S288c) (Baker's yeast).